A 173-amino-acid polypeptide reads, in one-letter code: Aliphatic sulfonate oxidoreductase, polyferredoxin-like subunit (173 aa).

3 consecutive 4Fe-4S ferredoxin-type domains span residues 9–40 (IWIL…WPEA), 48–80 (LFPG…VDEK), and 82–111 (GAVV…IPAG). 16 residues coordinate [4Fe-4S] cluster: cysteine 18, cysteine 21, cysteine 24, cysteine 28, cysteine 58, cysteine 61, cysteine 66, cysteine 70, cysteine 91, cysteine 94, cysteine 97, cysteine 101, cysteine 118, cysteine 121, cysteine 127, and cysteine 131.

As to quaternary structure, heterodimer composed of a small WOR5-S subunit, with four [4Fe-4S] clusters, and a large WOR5-L subunit, containing the active site tungsto-bispyranopterin cofactor as well as another [4Fe-4S] cluster. Requires [4Fe-4S] cluster as cofactor.

It is found in the cytoplasm. Functionally, polyferredoxin-like subunit of an oxidoreductase that can desulfonate and oxidize aliphatic sulfonates such as taurine. May serve as a an electron-transfer subunit between the catalytic subunit and ferredoxin. This Pyrococcus furiosus (strain ATCC 43587 / DSM 3638 / JCM 8422 / Vc1) protein is Aliphatic sulfonate oxidoreductase, polyferredoxin-like subunit.